We begin with the raw amino-acid sequence, 339 residues long: Phosphate acyltransferase (339 aa).

This sequence belongs to the PlsX family. Homodimer. Probably interacts with PlsY.

The protein resides in the cytoplasm. It carries out the reaction a fatty acyl-[ACP] + phosphate = an acyl phosphate + holo-[ACP]. Its pathway is lipid metabolism; phospholipid metabolism. In terms of biological role, catalyzes the reversible formation of acyl-phosphate (acyl-PO(4)) from acyl-[acyl-carrier-protein] (acyl-ACP). This enzyme utilizes acyl-ACP as fatty acyl donor, but not acyl-CoA. This Vesicomyosocius okutanii subsp. Calyptogena okutanii (strain HA) protein is Phosphate acyltransferase.